A 435-amino-acid polypeptide reads, in one-letter code: Elongation factor 1-alpha (435 aa).

In terms of domain architecture, tr-type G spans 4–227 (KPHLNLIVIG…YLDQLELPPK (224 aa)). The tract at residues 13-20 (GHIDHGKS) is G1. Position 13 to 20 (13 to 20 (GHIDHGKS)) interacts with GTP. Ser-20 contacts Mg(2+). The segment at 69–73 (GVTIN) is G2. The interval 90–93 (DAPG) is G3. GTP is bound by residues 90 to 94 (DAPGH) and 152 to 155 (NKMD). A G4 region spans residues 152-155 (NKMD). The tract at residues 193–195 (VAP) is G5.

The protein belongs to the TRAFAC class translation factor GTPase superfamily. Classic translation factor GTPase family. EF-Tu/EF-1A subfamily.

Its subcellular location is the cytoplasm. It catalyses the reaction GTP + H2O = GDP + phosphate + H(+). In terms of biological role, GTP hydrolase that promotes the GTP-dependent binding of aminoacyl-tRNA to the A-site of ribosomes during protein biosynthesis. In Saccharolobus solfataricus (strain ATCC 35092 / DSM 1617 / JCM 11322 / P2) (Sulfolobus solfataricus), this protein is Elongation factor 1-alpha.